Here is a 164-residue protein sequence, read N- to C-terminus: Sperm axonemal maintenance protein CFAP97D1 (164 aa).

The stretch at 61-88 forms a coiled coil; that stretch reads LSKIQGEQKRIDKIEYENRQLCQKIANA.

Belongs to the CFAP97 family. As to expression, expressed exclusively in testis.

In terms of biological role, required for male fertility through its role in axonemal doublet stabilization which is essential for sperm motility and fertilization. This is Sperm axonemal maintenance protein CFAP97D1 (Cfap97d1) from Mus musculus (Mouse).